An 827-amino-acid polypeptide reads, in one-letter code: Probable beta-glucosidase H (827 aa).

The active site involves Asp-223. In terms of domain architecture, PA14 spans 387 to 546 (RLLTNAVMHF…DSAEMVRSAV (160 aa)). N-linked (GlcNAc...) asparagine glycans are attached at residues Asn-471, Asn-594, Asn-600, and Asn-625.

It belongs to the glycosyl hydrolase 3 family.

It is found in the secreted. It catalyses the reaction Hydrolysis of terminal, non-reducing beta-D-glucosyl residues with release of beta-D-glucose.. Its pathway is glycan metabolism; cellulose degradation. Functionally, beta-glucosidases are one of a number of cellulolytic enzymes involved in the degradation of cellulosic biomass. Catalyzes the last step releasing glucose from the inhibitory cellobiose. In Aspergillus oryzae (strain ATCC 42149 / RIB 40) (Yellow koji mold), this protein is Probable beta-glucosidase H (bglH).